The primary structure comprises 380 residues: Cytochrome b (380 aa).

The next 4 helical transmembrane spans lie at 34-54, 78-99, 114-134, and 179-199; these read FGSLLGICLLTQILTGLLLAA, WLLRNLHANGASFFFICIYLHI, WNTGVVLLLTLMATAFVGYVL, and FFALHFLLPFMIAGLTLIHLT. Heme b contacts are provided by histidine 84 and histidine 98. Heme b is bound by residues histidine 183 and histidine 197. Histidine 202 lines the a ubiquinone pocket. Helical transmembrane passes span 227–247, 289–309, 321–341, and 348–368; these read LKDILGFMIMLLLLTTLALFH, LGGVLALAASVLILFLIPFLH, LSQLLFWLLVSNLFILTWIGS, and FIIIGQLASTTYFTIILVLFP.

It belongs to the cytochrome b family. In terms of assembly, the cytochrome bc1 complex contains 11 subunits: 3 respiratory subunits (MT-CYB, CYC1 and UQCRFS1), 2 core proteins (UQCRC1 and UQCRC2) and 6 low-molecular weight proteins (UQCRH/QCR6, UQCRB/QCR7, UQCRQ/QCR8, UQCR10/QCR9, UQCR11/QCR10 and a cleavage product of UQCRFS1). This cytochrome bc1 complex then forms a dimer. Heme b serves as cofactor.

Its subcellular location is the mitochondrion inner membrane. Component of the ubiquinol-cytochrome c reductase complex (complex III or cytochrome b-c1 complex) that is part of the mitochondrial respiratory chain. The b-c1 complex mediates electron transfer from ubiquinol to cytochrome c. Contributes to the generation of a proton gradient across the mitochondrial membrane that is then used for ATP synthesis. This is Cytochrome b (MT-CYB) from Trogon curucui (Blue-crowned trogon).